A 572-amino-acid chain; its full sequence is Urease subunit alpha (572 aa).

The region spanning 130–572 (GGVDTHIHFI…LPMAQRYFLF (443 aa)) is the Urease domain. The Ni(2+) site is built by H135, H137, and K218. An N6-carboxylysine modification is found at K218. Position 220 (H220) interacts with substrate. Residues H247 and H273 each coordinate Ni(2+). Residue H321 is the Proton donor of the active site. Ni(2+) is bound at residue D361.

This sequence belongs to the metallo-dependent hydrolases superfamily. Urease alpha subunit family. As to quaternary structure, heterotrimer of UreA (gamma), UreB (beta) and UreC (alpha) subunits. Three heterotrimers associate to form the active enzyme. It depends on Ni cation as a cofactor. Post-translationally, carboxylation allows a single lysine to coordinate two nickel ions.

It localises to the cytoplasm. It carries out the reaction urea + 2 H2O + H(+) = hydrogencarbonate + 2 NH4(+). It participates in nitrogen metabolism; urea degradation; CO(2) and NH(3) from urea (urease route): step 1/1. This is Urease subunit alpha from Ralstonia nicotianae (strain ATCC BAA-1114 / GMI1000) (Ralstonia solanacearum).